The primary structure comprises 541 residues: Probable inorganic phosphate transporter 1-8 (541 aa).

Residues 1–28 lie on the Cytoplasmic side of the membrane; that stretch reads MARQEQQQHLQVLSALDAAKTQWYHFTA. Residues 29–49 form a helical membrane-spanning segment; sequence IVVAGMGFFTDAYDLFCISLV. At 50–74 the chain is on the extracellular side; sequence TKLLGRIYYTDLAKENPGSLPPNVA. A helical transmembrane segment spans residues 75–95; that stretch reads AAVNGVAFCGTLAGQLFFGWL. Topologically, residues 96 to 102 are cytoplasmic; that stretch reads GDKLGRK. The chain crosses the membrane as a helical span at residues 103 to 123; it reads SVYGMTLLMMVICSIASGLSF. The Extracellular portion of the chain corresponds to 124–126; it reads SHT. Residues 127-147 traverse the membrane as a helical segment; it reads PTSVMATLCFFRFWLGFGIGG. At 148–168 the chain is on the cytoplasmic side; that stretch reads DYPLSATIMSEYANKKTRGAF. The helical transmembrane segment at 169–189 threads the bilayer; it reads IAAVFAMQGFGILAGGIVTLI. Topologically, residues 190–215 are extracellular; the sequence is ISSAFRAGFPAPAYQDDRAGSTVRQA. A helical membrane pass occupies residues 216-236; sequence DYVWRIILMLGAMPALLTYYW. At 237-297 the chain is on the cytoplasmic side; that stretch reads RMKMPETARY…GLFSRQFARR (61 aa). The helical transmembrane segment at 298-318 threads the bilayer; the sequence is HGLHLVGTATTWFLLDIAFYS. Over 319 to 353 the chain is Extracellular; it reads QNLFQKDIFTSINWIPKAKTMSALEEVFRIARAQT. The helical transmembrane segment at 354 to 374 threads the bilayer; that stretch reads LIALCGTVPGYWFTVFLIDIV. Residues 375–376 are Cytoplasmic-facing; that stretch reads GR. A helical membrane pass occupies residues 377–397; sequence FAIQLLGFFMMTVFMLGLAVP. At 398–404 the chain is on the extracellular side; that stretch reads YHHWTTK. A helical membrane pass occupies residues 405–425; that stretch reads GNHIGFVVMYAFTFFFANFGP. At 426–447 the chain is on the cytoplasmic side; the sequence is NSTTFIVPAEIFPARLRSTCHG. The chain crosses the membrane as a helical span at residues 448 to 468; it reads ISAAAGKAGAIIGSFGFLYAA. The Extracellular portion of the chain corresponds to 469 to 486; sequence QDPHKPDAGYKPGIGVRN. A helical transmembrane segment spans residues 487–507; sequence SLFVLAGCNLLGFICTFLVPE. Topologically, residues 508–541 are cytoplasmic; it reads SKGKSLEEMSGEAEDDDDEVAAAGGGAAVRPQTA. Residues 514-541 are disordered; it reads EEMSGEAEDDDDEVAAAGGGAAVRPQTA. Acidic residues predominate over residues 516–527; that stretch reads MSGEAEDDDDEV.

Belongs to the major facilitator superfamily. Phosphate:H(+) symporter (TC 2.A.1.9) family.

It is found in the membrane. In terms of biological role, high-affinity transporter for external inorganic phosphate. The protein is Probable inorganic phosphate transporter 1-8 (PHT1-8) of Oryza sativa subsp. japonica (Rice).